Reading from the N-terminus, the 184-residue chain is Exosome complex protein LRP1 (184 aa).

The segment at D157–K184 is disordered. The span at K164 to K184 shows a compositional bias: basic residues.

It belongs to the C1D family. Associates with nuclear form of the RNA exosome complex. Interacts with RRP4, RRP6, RRP45 and RRP46.

It is found in the nucleus. Its function is as follows. Required for exosome-dependent processing of pre-rRNA and small nucleolar RNA (snRNA) precursors. Involved in processing of 35S pre-rRNA at the A0, A1 and A2 sites. Required for activity of RRP6 in 7S pre-rRNA processing. Also has a role in 3'-processing of U4 and U5 small nuclear RNAs (snRNAs). Acts as a mRNA export factor. Mediates mRNA degradation upon UV irradiation. Maintains genome integrity where it is involved in both non-homologous end joining (NHEJ) and homologous recombination pathway repair of double strand DNA breaks. During NHEJ, required for joining 3'-overhanging ends. Also involved in telomere length regulation and maintenance. In Saccharomyces cerevisiae (strain ATCC 204508 / S288c) (Baker's yeast), this protein is Exosome complex protein LRP1 (LRP1).